A 140-amino-acid chain; its full sequence is Large-conductance mechanosensitive channel 3 (140 aa).

Transmembrane regions (helical) follow at residues 8 to 28, 30 to 50, and 81 to 101; these read FISK…AAFG, IVTS…FGGL, and GSFI…FLMV.

It belongs to the MscL family. As to quaternary structure, homopentamer.

The protein localises to the cell inner membrane. Functionally, channel that opens in response to stretch forces in the membrane lipid bilayer. May participate in the regulation of osmotic pressure changes within the cell. This is Large-conductance mechanosensitive channel 3 from Mesorhizobium japonicum (strain LMG 29417 / CECT 9101 / MAFF 303099) (Mesorhizobium loti (strain MAFF 303099)).